The following is a 118-amino-acid chain: Small ribosomal subunit protein uS11 (118 aa).

Belongs to the universal ribosomal protein uS11 family. Part of the 30S ribosomal subunit. Interacts with proteins S7 and S18. Binds to IF-3.

Its function is as follows. Located on the platform of the 30S subunit, it bridges several disparate RNA helices of the 16S rRNA. Forms part of the Shine-Dalgarno cleft in the 70S ribosome. In Carsonella ruddii (strain PV), this protein is Small ribosomal subunit protein uS11.